The chain runs to 1459 residues: Endogenous retrovirus group K member 7 Pol protein (1459 aa).

Residues 57–245 (LEKGHIEPSF…TPFHYLGMQI (189 aa)) enclose the Reverse transcriptase domain. Positions 161-164 (LPQG) match the LPQG motif. The YXDD signature appears at 195–198 (YIDD). Positions 460–590 (LENALTVFTD…ADLLVSSALI (131 aa)) constitute an RNase H type-1 domain. Residues aspartate 469, glutamate 497, aspartate 517, and aspartate 582 each coordinate Mg(2+). An Integrase-type zinc finger spans residues 587–628 (SALIKAQELHALTHVNAAGLKNKFDVTWKQAKDIVQHCTQCQ). 4 residues coordinate Zn(2+): histidine 596, histidine 600, cysteine 624, and cysteine 627. In terms of domain architecture, Integrase catalytic spans 642 to 803 (RGLCPNALWQ…TSAEQHLTGK (162 aa)). Residues 811–859 (KLIWWKDNKNKTWEIGKVITWGRGFACVSPGENQLPVWIPTRHLKFYNE) constitute a DNA-binding region (integrase-type).

The protein belongs to the beta type-B retroviral polymerase family. HERV class-II K(HML-2) pol subfamily.

It carries out the reaction DNA(n) + a 2'-deoxyribonucleoside 5'-triphosphate = DNA(n+1) + diphosphate. It catalyses the reaction Endonucleolytic cleavage to 5'-phosphomonoester.. Early post-infection, the reverse transcriptase converts the viral RNA genome into double-stranded viral DNA. The RNase H domain of the reverse transcriptase performs two functions. It degrades the RNA template and specifically removes the RNA primer from the RNA/DNA hybrid. Following nuclear import, the integrase catalyzes the insertion of the linear, double-stranded viral DNA into the host cell chromosome. Endogenous Pol proteins may have kept, lost or modified their original function during evolution. This Homo sapiens (Human) protein is Endogenous retrovirus group K member 7 Pol protein (ERVK-7).